A 240-amino-acid polypeptide reads, in one-letter code: Cysteine-rich secretory protein (240 aa).

An N-terminal signal peptide occupies residues 1 to 19 (MIAFIVLPILAAVLQQSSG). The SCP domain occupies 38 to 166 (VDLHNSLRRS…EYSYFYVCQY (129 aa)). 8 cysteine pairs are disulfide-bonded: C75/C153, C92/C167, C148/C164, C186/C193, C189/C198, C202/C235, C211/C229, and C220/C233. Residues 202–235 (CTKEDKYSNCKSLVQQAGCQDKQMQSDCSAICFC) form the ShKT domain.

This sequence belongs to the CRISP family. As to expression, expressed by the venom gland.

It is found in the secreted. In terms of biological role, weakly blocks contraction of smooth muscle elicited by high potassium-induced depolarization, but does not block caffeine-stimulated contraction. May target voltage-gated calcium channels on smooth muscle. The protein is Cysteine-rich secretory protein of Crotalus adamanteus (Eastern diamondback rattlesnake).